We begin with the raw amino-acid sequence, 153 residues long: Endoribonuclease YbeY (153 aa).

Zn(2+) contacts are provided by histidine 115, histidine 119, and histidine 125.

It belongs to the endoribonuclease YbeY family. Zn(2+) serves as cofactor.

The protein localises to the cytoplasm. In terms of biological role, single strand-specific metallo-endoribonuclease involved in late-stage 70S ribosome quality control and in maturation of the 3' terminus of the 16S rRNA. In Blochmanniella floridana, this protein is Endoribonuclease YbeY.